The chain runs to 615 residues: Extracellular metalloproteinase 1 (615 aa).

Residues 1-8 form the signal peptide; it reads SLPLHVLA. A propeptide spanning residues 9-235 is cleaved from the precursor; the sequence is HPQPSTSTSL…VHNVVDYVAH (227 aa). Residue asparagine 276 is glycosylated (N-linked (GlcNAc...) asparagine). Histidine 419 is a binding site for Zn(2+). Residue glutamate 420 is part of the active site. Zn(2+) is bound at residue histidine 423. N-linked (GlcNAc...) asparagine glycosylation is found at asparagine 464, asparagine 583, and asparagine 612.

The protein belongs to the peptidase M36 family. Zn(2+) serves as cofactor.

It localises to the secreted. Secreted metalloproteinase probably acting as a virulence factor. The chain is Extracellular metalloproteinase 1 (MEP1) from Trichophyton equinum (Horse ringworm fungus).